The following is a 249-amino-acid chain: MADS-box transcription factor 18 (249 aa).

One can recognise an MADS-box domain in the interval 1–61; sequence MGRGPVQLRR…GKLYEFSSHS (61 aa). The 92-residue stretch at 88-179 folds into the K-box domain; the sequence is QENWGDEYGI…KLMETEKEKN (92 aa). The interval 184 to 249 is disordered; the sequence is NTNREEQNGA…PPWMLRTSHT (66 aa). Polar residues predominate over residues 210–236; that stretch reads PTTNNSQSQPRGSGESEAQPSPAQAGN.

In terms of tissue distribution, widely expressed. Transcripts accumulate to higher levels in organs that retain meristematic characteristics: in the apical meristem and in the meristematic leaf primordia formed on its flank; in the developing panicle at the early stage of rachis-branch primordia differentiation; in the procambium of the rachis branches and in all floral organ primordia.

It is found in the nucleus. Its function is as follows. Probable transcription factor. This Oryza sativa subsp. indica (Rice) protein is MADS-box transcription factor 18 (MADS18).